The following is a 426-amino-acid chain: UDP-N-acetylglucosamine 1-carboxyvinyltransferase (426 aa).

22 to 23 provides a ligand contact to phosphoenolpyruvate; it reads KN. Arg93 contributes to the UDP-N-acetyl-alpha-D-glucosamine binding site. Asp117 acts as the Proton donor in catalysis. Positions 312 and 334 each coordinate UDP-N-acetyl-alpha-D-glucosamine.

Belongs to the EPSP synthase family. MurA subfamily.

The protein resides in the cytoplasm. It catalyses the reaction phosphoenolpyruvate + UDP-N-acetyl-alpha-D-glucosamine = UDP-N-acetyl-3-O-(1-carboxyvinyl)-alpha-D-glucosamine + phosphate. It functions in the pathway cell wall biogenesis; peptidoglycan biosynthesis. Its function is as follows. Cell wall formation. Adds enolpyruvyl to UDP-N-acetylglucosamine. In Treponema denticola (strain ATCC 35405 / DSM 14222 / CIP 103919 / JCM 8153 / KCTC 15104), this protein is UDP-N-acetylglucosamine 1-carboxyvinyltransferase.